The chain runs to 389 residues: Krueppel-like factor 17 (389 aa).

Disordered stretches follow at residues 1-48 (MYGR…SGVH) and 239-279 (LVSQ…GSSE). Polar residues predominate over residues 26–38 (AQDNENSAPILNM). Over residues 264–278 (KNSRPQEGTGRRGSS) the composition is skewed to basic and acidic residues. 3 consecutive C2H2-type zinc fingers follow at residues 283 to 307 (YCCN…QRKH), 313 to 337 (YSCN…MRVH), and 343 to 365 (YKCD…QKTH). The segment at 356-389 (DHLKQHQKTHRPGPSDPQANNNNGEQDSPPAAGP) is disordered. Residues 372–381 (PQANNNNGEQ) show a composition bias toward polar residues.

The protein belongs to the Sp1 C2H2-type zinc-finger protein family.

The protein resides in the nucleus. In terms of biological role, transcription repressor that binds to the promoter of target genes and prevents their expression. Acts as a negative regulator of epithelial-mesenchymal transition and metastasis in breast cancer. Specifically binds the 5'-CACCC-3' sequence in the promoter of ID1, a key metastasis regulator in breast cancer, and repress its expression. May be a germ cell-specific transcription factor that plays important roles in spermatid differentiation and oocyte development. In Homo sapiens (Human), this protein is Krueppel-like factor 17 (KLF17).